A 327-amino-acid chain; its full sequence is Ribosomal RNA small subunit methyltransferase H (327 aa).

Residues 37 to 39 (GGY), D55, F82, D99, and Q106 each bind S-adenosyl-L-methionine. Residues 303-327 (IATRTDAPAQPVAPETLGLPQLEGF) are disordered.

It belongs to the methyltransferase superfamily. RsmH family.

The protein resides in the cytoplasm. It carries out the reaction cytidine(1402) in 16S rRNA + S-adenosyl-L-methionine = N(4)-methylcytidine(1402) in 16S rRNA + S-adenosyl-L-homocysteine + H(+). In terms of biological role, specifically methylates the N4 position of cytidine in position 1402 (C1402) of 16S rRNA. The protein is Ribosomal RNA small subunit methyltransferase H of Jannaschia sp. (strain CCS1).